The primary structure comprises 721 residues: Fatty acid oxidation complex subunit alpha (721 aa).

Positions methionine 1–alanine 190 are enoyl-CoA hydratase/isomerase. Aspartate 297 provides a ligand contact to substrate. A 3-hydroxyacyl-CoA dehydrogenase region spans residues lysine 312–glutamate 721. NAD(+) contacts are provided by residues methionine 325, aspartate 344, valine 401–glutamate 403, lysine 408, and serine 430. The active-site For 3-hydroxyacyl-CoA dehydrogenase activity is the histidine 451. Asparagine 454 contributes to the NAD(+) binding site. The substrate site is built by asparagine 501 and tyrosine 660.

It in the N-terminal section; belongs to the enoyl-CoA hydratase/isomerase family. In the C-terminal section; belongs to the 3-hydroxyacyl-CoA dehydrogenase family. In terms of assembly, heterotetramer of two alpha chains (FadB) and two beta chains (FadA).

The catalysed reaction is a (3S)-3-hydroxyacyl-CoA + NAD(+) = a 3-oxoacyl-CoA + NADH + H(+). The enzyme catalyses a (3S)-3-hydroxyacyl-CoA = a (2E)-enoyl-CoA + H2O. It carries out the reaction a 4-saturated-(3S)-3-hydroxyacyl-CoA = a (3E)-enoyl-CoA + H2O. It catalyses the reaction (3S)-3-hydroxybutanoyl-CoA = (3R)-3-hydroxybutanoyl-CoA. The catalysed reaction is a (3Z)-enoyl-CoA = a 4-saturated (2E)-enoyl-CoA. The enzyme catalyses a (3E)-enoyl-CoA = a 4-saturated (2E)-enoyl-CoA. It functions in the pathway lipid metabolism; fatty acid beta-oxidation. In terms of biological role, involved in the aerobic and anaerobic degradation of long-chain fatty acids via beta-oxidation cycle. Catalyzes the formation of 3-oxoacyl-CoA from enoyl-CoA via L-3-hydroxyacyl-CoA. It can also use D-3-hydroxyacyl-CoA and cis-3-enoyl-CoA as substrate. This Pseudomonas savastanoi pv. phaseolicola (strain 1448A / Race 6) (Pseudomonas syringae pv. phaseolicola (strain 1448A / Race 6)) protein is Fatty acid oxidation complex subunit alpha.